The following is a 475-amino-acid chain: SAM50-like protein SPAC17C9.06 (475 aa).

The POTRA domain occupies 44-130 (VGISSIRVTG…LDVTIQVKEK (87 aa)).

The protein belongs to the SAM50/omp85 family. Associates with the mitochondrial contact site and cristae organizing system (MICOS) complex (also known as MINOS or MitOS complex).

The protein resides in the mitochondrion outer membrane. Functionally, may be required for the assembly pathway of mitochondrial outer membrane proteins. This is SAM50-like protein SPAC17C9.06 from Schizosaccharomyces pombe (strain 972 / ATCC 24843) (Fission yeast).